The chain runs to 212 residues: Ependymin (212 aa).

A signal peptide spans 1-20 (MRLTGLLCVALWSASAVVLA). 3 N-linked (GlcNAc...) asparagine glycosylation sites follow: Asn-69, Asn-92, and Asn-112.

It belongs to the ependymin family. In terms of assembly, forms disulfide-linked dimers. Binds calcium through the terminal sialic acids. In terms of tissue distribution, EPDs are synthesized in the meninx and secreted in the cerebrospinal fluid.

The protein localises to the secreted. Its function is as follows. May play a role in neural plasticity. May be involved during axon regeneration. The protein is Ependymin (epd) of Clupea harengus (Atlantic herring).